The sequence spans 206 residues: Threonine efflux protein (206 aa).

Residues 1–21 (MLMLFLTVAMVHIVALMSPGP) traverse the membrane as a helical segment. Over 22-43 (DFFFVSQTAVSRSRKEAMMGVL) the chain is Periplasmic. The chain crosses the membrane as a helical span at residues 44-64 (GITCGVMVWAGIALLGLHLII). Topologically, residues 65-66 (EK) are cytoplasmic. The helical transmembrane segment at 67-87 (MAWLHTLIMVGGGLYLCWMGY) threads the bilayer. At 88–149 (QMLRGALKKE…VGDNVGTTAR (62 aa)) the chain is on the periplasmic side. A helical membrane pass occupies residues 150-173 (WGIFALIIVETLAWFTVVASLFAL). Topologically, residues 174–206 (PQMRRGYQRLAKWIDGFAGALFAGFGIHLIISR) are cytoplasmic.

The protein belongs to the Rht family.

It localises to the cell inner membrane. In terms of biological role, conducts the efflux of threonine. The sequence is that of Threonine efflux protein (rhtC) from Escherichia coli O157:H7.